The primary structure comprises 356 residues: MRVTDFSFELPESLIAHYPQPERSRCRLLSLDGPTGALTHGTFTDLLDKLNPGDLLVFNNTRVIPARLFGRKASGGKIEVLVERMLDDKRILAHIRASKAPKPGAELLLGDDESINATMTARHGALFEVEFNDARPVLEILNAIGHMPLPPYIDRPDEDADRELYQTVYSEKPGAVAAPTAGLHFDDPLLAALREKGIEMAFVTLHVGAGTFQPVRVETIEDHIMHSEYAEVPQEVVDAVLAAKARGNRIIAVGTTSVRSLESAAQAAKNDLIEPFFGDTQIFIYPGYQYKVIDALVTNFHLPESTLIMLVSAFAGYQHTMNAYKAAVEQNYRFFSYGDAMFITYNPQALNERVGK.

It belongs to the QueA family. Monomer.

It localises to the cytoplasm. The catalysed reaction is 7-aminomethyl-7-carbaguanosine(34) in tRNA + S-adenosyl-L-methionine = epoxyqueuosine(34) in tRNA + adenine + L-methionine + 2 H(+). It participates in tRNA modification; tRNA-queuosine biosynthesis. In terms of biological role, transfers and isomerizes the ribose moiety from AdoMet to the 7-aminomethyl group of 7-deazaguanine (preQ1-tRNA) to give epoxyqueuosine (oQ-tRNA). In Citrobacter koseri (strain ATCC BAA-895 / CDC 4225-83 / SGSC4696), this protein is S-adenosylmethionine:tRNA ribosyltransferase-isomerase.